Reading from the N-terminus, the 173-residue chain is Translation initiation factor IF-3 (173 aa).

The protein belongs to the IF-3 family. In terms of assembly, monomer.

It localises to the cytoplasm. In terms of biological role, IF-3 binds to the 30S ribosomal subunit and shifts the equilibrium between 70S ribosomes and their 50S and 30S subunits in favor of the free subunits, thus enhancing the availability of 30S subunits on which protein synthesis initiation begins. The chain is Translation initiation factor IF-3 from Clostridium tetani (strain Massachusetts / E88).